The following is a 68-amino-acid chain: Neuronal regeneration-related protein (68 aa).

Positions 22 to 54 are disordered; the sequence is EGRLPKGRLPVPKEVNRKKNDETNAASLTPLGS. Positions 44 to 54 are enriched in polar residues; it reads TNAASLTPLGS. Phosphoserine is present on S59.

Interacts with the latency-associated peptides (LAP) of TGFB1 and TGFB2; the interaction results in a decrease in TGFB autoinduction. Interacts with FLNA. In terms of processing, phosphorylated on Ser-59. Phosphorylation decreases stability and activity. In terms of tissue distribution, expressed in lung (at protein level).

Its subcellular location is the cytoplasm. Its function is as follows. May have roles in neural function. Ectopic expression augments motility of gliomas. Also promotes axonal regeneration. May also have functions in cellular differentiation. Induces differentiation of fibroblast into myofibroblast and myofibroblast ameboid migration. Increases retinoic-acid regulation of lipid-droplet biogenesis. Down-regulates the expression of TGFB1 and TGFB2 but not of TGFB3. May play a role in the regulation of alveolar generation. In Homo sapiens (Human), this protein is Neuronal regeneration-related protein (NREP).